A 143-amino-acid chain; its full sequence is Large ribosomal subunit protein uL13 (143 aa).

This sequence belongs to the universal ribosomal protein uL13 family. Part of the 50S ribosomal subunit.

In terms of biological role, this protein is one of the early assembly proteins of the 50S ribosomal subunit, although it is not seen to bind rRNA by itself. It is important during the early stages of 50S assembly. This chain is Large ribosomal subunit protein uL13, found in Coprothermobacter proteolyticus (strain ATCC 35245 / DSM 5265 / OCM 4 / BT).